Consider the following 344-residue polypeptide: Phenylalanine--tRNA ligase alpha subunit (344 aa).

Position 256 (Glu256) interacts with Mg(2+).

This sequence belongs to the class-II aminoacyl-tRNA synthetase family. Phe-tRNA synthetase alpha subunit type 1 subfamily. As to quaternary structure, tetramer of two alpha and two beta subunits. Requires Mg(2+) as cofactor.

It is found in the cytoplasm. The catalysed reaction is tRNA(Phe) + L-phenylalanine + ATP = L-phenylalanyl-tRNA(Phe) + AMP + diphosphate + H(+). This is Phenylalanine--tRNA ligase alpha subunit from Onion yellows phytoplasma (strain OY-M).